The following is a 126-amino-acid chain: Ribosome-binding factor A (126 aa).

Belongs to the RbfA family. Monomer. Binds 30S ribosomal subunits, but not 50S ribosomal subunits or 70S ribosomes.

The protein resides in the cytoplasm. Its function is as follows. One of several proteins that assist in the late maturation steps of the functional core of the 30S ribosomal subunit. Associates with free 30S ribosomal subunits (but not with 30S subunits that are part of 70S ribosomes or polysomes). Required for efficient processing of 16S rRNA. May interact with the 5'-terminal helix region of 16S rRNA. This is Ribosome-binding factor A from Clostridioides difficile (strain 630) (Peptoclostridium difficile).